We begin with the raw amino-acid sequence, 158 residues long: Ribosome maturation factor RimP (158 aa).

This sequence belongs to the RimP family.

It localises to the cytoplasm. Functionally, required for maturation of 30S ribosomal subunits. This Leuconostoc citreum (strain KM20) protein is Ribosome maturation factor RimP.